The sequence spans 368 residues: DNA-dependent metalloprotease dvc-1 (368 aa).

A SprT-like domain is found at 21 to 190; sequence HALFIQFDAR…QSCGGNFLKV (170 aa). A Zn(2+)-binding site is contributed by H89. E90 is an active-site residue. 2 residues coordinate Zn(2+): H93 and H108. The tract at residues 187 to 309 is disordered; the sequence is FLKVKEPEGY…PVNFTSPSSA (123 aa). Positions 226-237 are enriched in basic and acidic residues; it reads TLDDFFKKDGKN. A compositionally biased stretch (low complexity) spans 238-274; the sequence is SSDNSTSKSPTKPSTSLFTGSGQKLGGSSSTSSLLNS. The segment at 344 to 368 adopts a UBZ4-type zinc-finger fold; the sequence is SVICPSCNTEVMENLIHGHLDYCLG. Residues C347, C350, H362, and C366 each contribute to the Zn(2+) site.

Belongs to the Spartan family. In terms of assembly, interacts with vcp/p97 (cdc-48.1 or cdc-48.2).

The protein resides in the nucleus. It localises to the chromosome. In terms of biological role, DNA-dependent metalloendopeptidase that mediates the proteolytic cleavage of covalent DNA-protein cross-links (DPCs) during DNA synthesis, thereby playing a key role in maintaining genomic integrity. DPCs are highly toxic DNA lesions that interfere with essential chromatin transactions, such as replication and transcription, and which are induced by reactive agents, such as UV light or formaldehyde. Associates with the DNA replication machinery and specifically removes DPCs during DNA synthesis. Regulator of UV-induced DNA damage response: required to protect genome stability during DNA replication, possibly via recruitment of vcp/p97 (cdc-48.1 or cdc-48.2) recruitment. The polypeptide is DNA-dependent metalloprotease dvc-1 (Caenorhabditis elegans).